The sequence spans 350 residues: Phenylalanine--tRNA ligase alpha subunit (350 aa).

Position 257 (glutamate 257) interacts with Mg(2+).

The protein belongs to the class-II aminoacyl-tRNA synthetase family. Phe-tRNA synthetase alpha subunit type 1 subfamily. In terms of assembly, tetramer of two alpha and two beta subunits. The cofactor is Mg(2+).

It is found in the cytoplasm. The catalysed reaction is tRNA(Phe) + L-phenylalanine + ATP = L-phenylalanyl-tRNA(Phe) + AMP + diphosphate + H(+). In Listeria monocytogenes serovar 1/2a (strain ATCC BAA-679 / EGD-e), this protein is Phenylalanine--tRNA ligase alpha subunit.